The following is a 100-amino-acid chain: MKISEAEVRHVAKLSKLEFSDQETAEFATSLSKIVDMVELLNEVDTTGVAVTTTMADRKNVLRADIAQKGESREELFKNVPESQDNFIKVPAILDGGGDA.

The protein belongs to the GatC family. In terms of assembly, heterotrimer of A, B and C subunits.

The enzyme catalyses L-glutamyl-tRNA(Gln) + L-glutamine + ATP + H2O = L-glutaminyl-tRNA(Gln) + L-glutamate + ADP + phosphate + H(+). It carries out the reaction L-aspartyl-tRNA(Asn) + L-glutamine + ATP + H2O = L-asparaginyl-tRNA(Asn) + L-glutamate + ADP + phosphate + 2 H(+). Allows the formation of correctly charged Asn-tRNA(Asn) or Gln-tRNA(Gln) through the transamidation of misacylated Asp-tRNA(Asn) or Glu-tRNA(Gln) in organisms which lack either or both of asparaginyl-tRNA or glutaminyl-tRNA synthetases. The reaction takes place in the presence of glutamine and ATP through an activated phospho-Asp-tRNA(Asn) or phospho-Glu-tRNA(Gln). This Streptococcus suis (strain 98HAH33) protein is Aspartyl/glutamyl-tRNA(Asn/Gln) amidotransferase subunit C.